We begin with the raw amino-acid sequence, 199 residues long: Heparin-binding hemagglutinin (199 aa).

Low complexity predominate over residues 162–180; it reads KAAPAKKAAPAKKAAPAKK. Positions 162–199 are disordered; it reads KAAPAKKAAPAKKAAPAKKAAAKKAPAKKAAAKKVTQK. Over residues 181–199 the composition is skewed to basic residues; that stretch reads AAAKKAPAKKAAAKKVTQK.

This sequence to M.leprae HbhA. In terms of processing, glycosylated. Glycosylation may protect the protein from proteolytic degradation and be important for hemagglutination. It suggests that the carbohydrate moiety may be located within the C-terminal domain of HbhA.

The protein localises to the cell surface. Functionally, required for extrapulmonary dissemination. Mediates adherence to epithelial cells by binding to sulfated glycoconjugates present at the surface of these cells. The protein is Heparin-binding hemagglutinin (hbhA) of Mycobacterium tuberculosis (strain CDC 1551 / Oshkosh).